We begin with the raw amino-acid sequence, 345 residues long: RNA polymerase II holoenzyme cyclin-like subunit (345 aa).

One can recognise a Cyclin N-terminal domain in the interval 53 to 144; sequence QQINRLGKRM…IGECEFYLIS (92 aa). Residues 256-285 form a disordered region; it reads GLTPQSSSGLQAMLPPQSPAGEGPAEGNKN.

It belongs to the cyclin family. Cyclin C subfamily. In terms of assembly, component of the srb8-11 complex, a regulatory module of the Mediator complex.

Its subcellular location is the nucleus. Component of the srb8-11 complex. The srb8-11 complex is a regulatory module of the Mediator complex which is itself involved in regulation of basal and activated RNA polymerase II-dependent transcription. The srb8-11 complex may be involved in the transcriptional repression of a subset of genes regulated by Mediator. It may inhibit the association of the Mediator complex with RNA polymerase II to form the holoenzyme complex. The srb8-11 complex phosphorylates the C-terminal domain (CTD) of the largest subunit of RNA polymerase II. The sequence is that of RNA polymerase II holoenzyme cyclin-like subunit (ssn8) from Neurospora crassa (strain ATCC 24698 / 74-OR23-1A / CBS 708.71 / DSM 1257 / FGSC 987).